The following is a 146-amino-acid chain: Hemoglobin subunit beta (146 aa).

Residue Val-1 is modified to N-acetylvaline. Residues 2 to 146 enclose the Globin domain; sequence DLTAEEKAAV…VANALAHKYH (145 aa). Ser-44 is subject to Phosphoserine. N6-acetyllysine is present on Lys-59. His-63 contacts heme b. At Lys-82 the chain carries N6-acetyllysine. His-92 provides a ligand contact to heme b. Cys-93 carries the S-nitrosocysteine modification. Lys-144 is subject to N6-acetyllysine.

It belongs to the globin family. As to quaternary structure, heterotetramer of two alpha chains and two beta chains. As to expression, red blood cells.

In terms of biological role, involved in oxygen transport from the lung to the various peripheral tissues. This chain is Hemoglobin subunit beta (HBB), found in Rhinoceros unicornis (Greater Indian rhinoceros).